The following is a 238-amino-acid chain: Cysteine-rich venom protein pseudecin (238 aa).

Positions 1–19 (MIAFIVLLSLAAVLQQSSG) are cleaved as a signal peptide. A propeptide spanning residues 20–28 (TVDFASESS) is cleaved from the precursor. An SCP domain is found at 38–164 (VDKHNALRRS…SSKYLYVCQY (127 aa)). The Zn(2+) site is built by Thr51 and Ser106. 8 cysteine pairs are disulfide-bonded: Cys75-Cys153, Cys92-Cys165, Cys148-Cys162, Cys184-Cys191, Cys187-Cys196, Cys200-Cys233, Cys209-Cys227, and Cys218-Cys231. Residues 200-233 (CNYNNDFSNCKSLAKKSKCQTEWIKKKCPASCFC) form the ShKT domain.

Expressed by the venom gland.

It localises to the secreted. Its function is as follows. Blocks olfactory (CNGA2) and retinal (CNGA1) CNG channel currents. Is really less potent that Pseudechetoxin. Does not affect neither depolarization- nor caffeine-induced contraction of smooth muscle. This Pseudechis porphyriacus (Red-bellied black snake) protein is Cysteine-rich venom protein pseudecin.